The sequence spans 310 residues: MEKCTKSSSTMQVEPSFLQAENLILRLQMQHPTTENTAKRGQVMPALATTVMPVPYSLEHLTQFHGDPANCSEFLTQVTTYLTALQISNPANDAQIKLFFDYLSQQLESCGIISGPDKSTLLKQYENLILEFQQSFGKPTKQEINPLMNAKFDKGDNSSQQDPATFHLLAQNLICNETNQSGQFEKALADPNQDEESVTDMMDNLPDLITQCIQLDKKHSDRPELLQSETQLPLLASLIQHQALFSPTDPPPKKGPIQLREGQLPLTPAKRARQQETQLCLYCSQSGHFTRDCLAKRSRAPATTNNTAHQ.

A CCHC-type zinc finger spans residues 278–295 (QLCLYCSQSGHFTRDCLA).

In terms of biological role, involved in cognitive function in the brain, possibly via the noradrenergic system. The polypeptide is Retrotransposon Gag-like protein 4 (Homo sapiens (Human)).